The following is a 570-amino-acid chain: 2-isopropylmalate synthase (570 aa).

In terms of domain architecture, Pyruvate carboxyltransferase spans 31–305 (PIWMSTDLRD…DPELDFSHIN (275 aa)). Mg(2+)-binding residues include Asp-40, His-244, His-246, and Asn-280. Residues 437–570 (SDGAIGYVSH…RRSSAQATVA (134 aa)) form a regulatory domain region.

It belongs to the alpha-IPM synthase/homocitrate synthase family. LeuA type 2 subfamily. Homodimer. The cofactor is Mg(2+).

It is found in the cytoplasm. The catalysed reaction is 3-methyl-2-oxobutanoate + acetyl-CoA + H2O = (2S)-2-isopropylmalate + CoA + H(+). It functions in the pathway amino-acid biosynthesis; L-leucine biosynthesis; L-leucine from 3-methyl-2-oxobutanoate: step 1/4. Catalyzes the condensation of the acetyl group of acetyl-CoA with 3-methyl-2-oxobutanoate (2-ketoisovalerate) to form 3-carboxy-3-hydroxy-4-methylpentanoate (2-isopropylmalate). This chain is 2-isopropylmalate synthase, found in Ralstonia pickettii (strain 12J).